Consider the following 170-residue polypeptide: Crossover junction endodeoxyribonuclease RuvC (170 aa).

Residues aspartate 11, glutamate 71, and aspartate 143 contribute to the active site. Mg(2+) is bound by residues aspartate 11, glutamate 71, and aspartate 143.

The protein belongs to the RuvC family. Homodimer which binds Holliday junction (HJ) DNA. The HJ becomes 2-fold symmetrical on binding to RuvC with unstacked arms; it has a different conformation from HJ DNA in complex with RuvA. In the full resolvosome a probable DNA-RuvA(4)-RuvB(12)-RuvC(2) complex forms which resolves the HJ. It depends on Mg(2+) as a cofactor.

It localises to the cytoplasm. The catalysed reaction is Endonucleolytic cleavage at a junction such as a reciprocal single-stranded crossover between two homologous DNA duplexes (Holliday junction).. In terms of biological role, the RuvA-RuvB-RuvC complex processes Holliday junction (HJ) DNA during genetic recombination and DNA repair. Endonuclease that resolves HJ intermediates. Cleaves cruciform DNA by making single-stranded nicks across the HJ at symmetrical positions within the homologous arms, yielding a 5'-phosphate and a 3'-hydroxyl group; requires a central core of homology in the junction. The consensus cleavage sequence is 5'-(A/T)TT(C/G)-3'. Cleavage occurs on the 3'-side of the TT dinucleotide at the point of strand exchange. HJ branch migration catalyzed by RuvA-RuvB allows RuvC to scan DNA until it finds its consensus sequence, where it cleaves and resolves the cruciform DNA. In Sinorhizobium fredii (strain NBRC 101917 / NGR234), this protein is Crossover junction endodeoxyribonuclease RuvC.